The sequence spans 157 residues: 6,7-dimethyl-8-ribityllumazine synthase (157 aa).

5-amino-6-(D-ribitylamino)uracil contacts are provided by residues phenylalanine 22, 57–59 (AYE), and 81–83 (TVI). Residue 86–87 (GT) coordinates (2S)-2-hydroxy-3-oxobutyl phosphate. The active-site Proton donor is the histidine 89. Residue phenylalanine 114 participates in 5-amino-6-(D-ribitylamino)uracil binding. Arginine 128 contributes to the (2S)-2-hydroxy-3-oxobutyl phosphate binding site.

This sequence belongs to the DMRL synthase family. As to quaternary structure, forms an icosahedral capsid composed of 60 subunits, arranged as a dodecamer of pentamers.

The enzyme catalyses (2S)-2-hydroxy-3-oxobutyl phosphate + 5-amino-6-(D-ribitylamino)uracil = 6,7-dimethyl-8-(1-D-ribityl)lumazine + phosphate + 2 H2O + H(+). It participates in cofactor biosynthesis; riboflavin biosynthesis; riboflavin from 2-hydroxy-3-oxobutyl phosphate and 5-amino-6-(D-ribitylamino)uracil: step 1/2. Catalyzes the formation of 6,7-dimethyl-8-ribityllumazine by condensation of 5-amino-6-(D-ribitylamino)uracil with 3,4-dihydroxy-2-butanone 4-phosphate. This is the penultimate step in the biosynthesis of riboflavin. In Pasteurella multocida (strain Pm70), this protein is 6,7-dimethyl-8-ribityllumazine synthase.